The chain runs to 92 residues: RNA-binding protein Hfq (92 aa).

The 60-residue stretch at 9–68 (DPYLNALRRERIPVSIYLVNGIKLQGQIESFDQFVILLKNTVSQMVYKHAISTVVPARSV) folds into the Sm domain. A compositionally biased stretch (polar residues) spans 69–81 (SHNNGGTSHTQQA). The tract at residues 69 to 92 (SHNNGGTSHTQQAPAVEAVADKAE) is disordered.

It belongs to the Hfq family. Homohexamer.

Functionally, RNA chaperone that binds small regulatory RNA (sRNAs) and mRNAs to facilitate mRNA translational regulation in response to envelope stress, environmental stress and changes in metabolite concentrations. Also binds with high specificity to tRNAs. This Actinobacillus pleuropneumoniae serotype 5b (strain L20) protein is RNA-binding protein Hfq.